A 270-amino-acid polypeptide reads, in one-letter code: MDLIQIIVLAIVQGLTEFLPVSSSAHLILFPHLVGWDDQGLAFDVAVHLGTLAAVVWYFRQEVFGMTRDWFASLARRERVGDSRLAWAVILGTIPAGIAGLLFKGFIEEQMRSPLVIAWATIGFGLLLWWSDVVSRRTPQPRDEHSLSWKDILLIGCAQALALIPGTSRSGVTMTAGLLLGLSRSGAARFSFLLSIPIIVLASGLSTLDLVEGEVAVDWTAMGLGVVLSAISAYLCIHFFLKLLERVGMLPFVIYRLILGAVLLVLFSGV.

8 consecutive transmembrane segments (helical) span residues 1 to 21, 39 to 59, 87 to 107, 114 to 134, 147 to 167, 190 to 210, 221 to 241, and 247 to 267; these read MDLIQIIVLAIVQGLTEFLPV, QGLAFDVAVHLGTLAAVVWYF, WAVILGTIPAGIAGLLFKGFI, PLVIAWATIGFGLLLWWSDVV, LSWKDILLIGCAQALALIPGT, FSFLLSIPIIVLASGLSTLDL, AMGLGVVLSAISAYLCIHFFL, and VGMLPFVIYRLILGAVLLVLF.

This sequence belongs to the UppP family.

It localises to the cell inner membrane. The enzyme catalyses di-trans,octa-cis-undecaprenyl diphosphate + H2O = di-trans,octa-cis-undecaprenyl phosphate + phosphate + H(+). Functionally, catalyzes the dephosphorylation of undecaprenyl diphosphate (UPP). Confers resistance to bacitracin. This chain is Undecaprenyl-diphosphatase 2, found in Stutzerimonas stutzeri (strain A1501) (Pseudomonas stutzeri).